A 309-amino-acid chain; its full sequence is Protein FdhE homolog (309 aa).

Belongs to the FdhE family.

The protein localises to the cytoplasm. Necessary for formate dehydrogenase activity. This chain is Protein FdhE homolog, found in Pseudomonas aeruginosa (strain ATCC 15692 / DSM 22644 / CIP 104116 / JCM 14847 / LMG 12228 / 1C / PRS 101 / PAO1).